Here is a 634-residue protein sequence, read N- to C-terminus: Kelch-like protein 22 (634 aa).

An N-acetylalanine modification is found at Ala-2. The BTB domain occupies 50–117 (FDVVLVVEGR…IYTSELELSL (68 aa)). 6 Kelch repeats span residues 299–349 (CVVG…VLNN), 350–399 (FVYL…VVGR), 400–446 (YIYA…TLEG), 448–493 (MYVT…TLLD), 494–544 (KLYV…VLDT), and 545–593 (RIYV…VLTL). Thr-463 is modified (phosphothreonine). A Phosphotyrosine modification is found at Tyr-466. A disordered region spans residues 600-634 (EPPRGTPDRSQADPDFASEVMSVSDWEEFDNSSED). A Phosphothreonine modification is found at Thr-605. Acidic residues predominate over residues 624–634 (DWEEFDNSSED).

Component of the BCR(KLHL22) E3 ubiquitin ligase complex, at least composed of CUL3, KLHL22 and RBX1. Interacts with PLK1. Interacts with DEPDC5 (via DEP domain); the interaction depends on amino acid availability. Interacts with YWHAE; required for the nuclear localization of KLHL22 upon amino acid starvation.

It is found in the cytoplasm. It localises to the cytosol. Its subcellular location is the cytoskeleton. The protein resides in the microtubule organizing center. The protein localises to the centrosome. It is found in the spindle. It localises to the nucleus. Its subcellular location is the lysosome. The protein operates within protein modification; protein ubiquitination. Its function is as follows. Substrate-specific adapter of a BCR (BTB-CUL3-RBX1) E3 ubiquitin ligase complex required for chromosome alignment and localization of PLK1 at kinetochores. The BCR(KLHL22) ubiquitin ligase complex mediates monoubiquitination of PLK1, leading to PLK1 dissociation from phosphoreceptor proteins and subsequent removal from kinetochores, allowing silencing of the spindle assembly checkpoint (SAC) and chromosome segregation. Monoubiquitination of PLK1 does not lead to PLK1 degradation. The BCR(KLHL22) ubiquitin ligase complex is also responsible for the amino acid-stimulated 'Lys-48' polyubiquitination and proteasomal degradation of DEPDC5. Through the degradation of DEPDC5, releases the GATOR1 complex-mediated inhibition of the TORC1 pathway. It is therefore an amino acid-dependent activator within the amino acid-sensing branch of the TORC1 pathway, indirectly regulating different cellular processes including cell growth and autophagy. In Ailuropoda melanoleuca (Giant panda), this protein is Kelch-like protein 22 (KLHL22).